Reading from the N-terminus, the 216-residue chain is Homologous-pairing protein 2 (216 aa).

It belongs to the HOP2 family. Interacts with mcp7.

It localises to the nucleus. In terms of biological role, required for proper homologous pairing and efficient cross-over and intragenic recombination during meiosis. Acts indirectly in a process facilitating homologous recombination. Acts during mid- to late-horse-tail period. The polypeptide is Homologous-pairing protein 2 (meu13) (Schizosaccharomyces pombe (strain 972 / ATCC 24843) (Fission yeast)).